A 259-amino-acid chain; its full sequence is Ribonuclease HII (259 aa).

The region spanning 70–258 (TLIVGIDEVG…VKSLVLGKKE (189 aa)) is the RNase H type-2 domain. A divalent metal cation is bound by residues Asp-76, Glu-77, and Asp-168.

This sequence belongs to the RNase HII family. Mn(2+) serves as cofactor. The cofactor is Mg(2+).

It localises to the cytoplasm. The enzyme catalyses Endonucleolytic cleavage to 5'-phosphomonoester.. Functionally, endonuclease that specifically degrades the RNA of RNA-DNA hybrids. The polypeptide is Ribonuclease HII (Streptococcus pneumoniae serotype 2 (strain D39 / NCTC 7466)).